The primary structure comprises 336 residues: Probable G-protein coupled receptor 82 (336 aa).

The Extracellular portion of the chain corresponds to 1–11 (MNNNTTCIQPS). 2 N-linked (GlcNAc...) asparagine glycosylation sites follow: Asn3 and Asn4. Residues 12–32 (MISSMALPIIYILLCIVGVFG) traverse the membrane as a helical segment. The Cytoplasmic portion of the chain corresponds to 33-55 (NTLSQWIFLTKIGKKTSTHIYLS). Residues 56–76 (HLVTANLLVCSAMPFMSIYFL) form a helical membrane-spanning segment. Residues 77–92 (KGFQWEYQSAQCRVVN) lie on the Extracellular side of the membrane. A helical transmembrane segment spans residues 93 to 115 (FLGTLSMHASMFVSLLILSWIAI). Residues 116–156 (SRYATLMQKDSSQETTSCYEKIFYGHLLKKFRQPNFARKLC) are Cytoplasmic-facing. A helical membrane pass occupies residues 157 to 177 (IYIWGVVLGIIIPVTVYYSVI). Residues 178-197 (EATEGEESLCYNRQMELGAM) lie on the Extracellular side of the membrane. Residues 198–218 (ISQIAGLIGTTFIGFSFLVVL) form a helical membrane-spanning segment. Over 219–251 (TSYYSFVSHLRKIRTCTSIMEKDLTYSSVKRHL) the chain is Cytoplasmic. Residues 252-272 (LVIQILLIVCFLPYSIFKPIF) traverse the membrane as a helical segment. Residues 273–336 (YVLHQRDNCQ…SNSAHMQSYG (64 aa)) lie on the Extracellular side of the membrane.

It belongs to the G-protein coupled receptor 1 family.

It localises to the cell membrane. Orphan receptor. This is Probable G-protein coupled receptor 82 (GPR82) from Homo sapiens (Human).